The chain runs to 405 residues: Macrolide efflux protein A (405 aa).

Transmembrane regions (helical) follow at residues 14–34 (IWAGQAVSLITSAILQMAIIF), 48–68 (MASLLGFLPYAVFGPAIGVLV), 76–98 (IMIGADLIIAAAGSVLTIVAFYM), 145–165 (SLQSISYIVSPAVAALLYSVW), 168–188 (NAIIAIDVLGAVIASITVAIV), 222–242 (FALLLVGTLYMFVYMPINALF), 259–279 (ITEISFASGMLIGGLLLGLFG), 285–305 (ILLITASIFMMGISLTISGLL), 310–330 (FFIFVVCCAIMGLSVPFYSGV), 350–370 (LTGSIMSLAMPIGLILSALFA), and 373–393 (IGVNHWFLLSGTLIICIAIVC).

Belongs to the major facilitator superfamily. Drug:H(+) antiporter-3 (DHA3) (TC 2.A.1.21) family.

The protein localises to the cell membrane. Functionally, confers resistance to 14-membered macrolides including erythromycin and to 15-membered macrolides but not to 16-membered macrolides, lincosamides or analogs of streptogramin B. May function as an efflux pump to regulate intracellular macrolide levels. This Streptococcus pyogenes serotype M6 (strain ATCC BAA-946 / MGAS10394) protein is Macrolide efflux protein A.